Consider the following 435-residue polypeptide: AP-2 complex subunit mu (435 aa).

Positions 170 to 434 (RNELFLDVLE…IGRSGIYETR (265 aa)) constitute an MHD domain. Residues K341, K345, and K354 each contribute to the a 1,2-diacyl-sn-glycero-3-phospho-(1D-myo-inositol-3,4,5-trisphosphate) site.

It belongs to the adaptor complexes medium subunit family. As to quaternary structure, adaptor protein complex 2 (AP-2) is a heterotetramer composed of two large adaptins (alpha-type subunit and beta-type subunit), a medium adaptin (mu-type subunit) and a small adaptin (sigma-type subunit).

It is found in the cell membrane. The protein localises to the membrane. It localises to the coated pit. In terms of biological role, component of the adaptor complexes which link clathrin to receptors in coated vesicles. Clathrin-associated protein complexes are believed to interact with the cytoplasmic tails of membrane proteins, leading to their selection and concentration. AP50 is a subunit of the plasma membrane adaptor. The complex binds polyphosphoinositide-containing lipids. The polypeptide is AP-2 complex subunit mu (ap2m1) (Xenopus tropicalis (Western clawed frog)).